A 391-amino-acid polypeptide reads, in one-letter code: Na(+)/H(+) antiporter NhaA (391 aa).

A run of 11 helical transmembrane segments spans residues 14 to 34 (AGGI…NSPL), 59 to 79 (LLLW…GLEV), 95 to 115 (SLPS…YLLF), 124 to 144 (AGWA…MALL), 154 to 174 (VFLL…IALF), 177 to 197 (SDLS…LVGL), 213 to 233 (LILW…GVII), 261 to 281 (FLIL…NMSL), 290 to 310 (IGIA…FSFI), 328 to 348 (IAPV…IASL), and 363 to 383 (LGTL…LSKV).

Belongs to the NhaA Na(+)/H(+) (TC 2.A.33) antiporter family.

It localises to the cell inner membrane. The enzyme catalyses Na(+)(in) + 2 H(+)(out) = Na(+)(out) + 2 H(+)(in). In terms of biological role, na(+)/H(+) antiporter that extrudes sodium in exchange for external protons. This chain is Na(+)/H(+) antiporter NhaA, found in Shewanella putrefaciens (strain CN-32 / ATCC BAA-453).